We begin with the raw amino-acid sequence, 258 residues long: Imidazole glycerol phosphate synthase subunit HisF (258 aa).

Active-site residues include Asp-12 and Asp-131.

It belongs to the HisA/HisF family. In terms of assembly, heterodimer of HisH and HisF.

The protein localises to the cytoplasm. It catalyses the reaction 5-[(5-phospho-1-deoxy-D-ribulos-1-ylimino)methylamino]-1-(5-phospho-beta-D-ribosyl)imidazole-4-carboxamide + L-glutamine = D-erythro-1-(imidazol-4-yl)glycerol 3-phosphate + 5-amino-1-(5-phospho-beta-D-ribosyl)imidazole-4-carboxamide + L-glutamate + H(+). It functions in the pathway amino-acid biosynthesis; L-histidine biosynthesis; L-histidine from 5-phospho-alpha-D-ribose 1-diphosphate: step 5/9. Its function is as follows. IGPS catalyzes the conversion of PRFAR and glutamine to IGP, AICAR and glutamate. The HisF subunit catalyzes the cyclization activity that produces IGP and AICAR from PRFAR using the ammonia provided by the HisH subunit. The sequence is that of Imidazole glycerol phosphate synthase subunit HisF from Arthrobacter sp. (strain FB24).